Consider the following 380-residue polypeptide: Hydrogenase maturation factor HypD2 (380 aa).

Residues C36, C64, and C67 each coordinate Fe cation.

It belongs to the HypD family. Requires [4Fe-4S] cluster as cofactor.

It functions in the pathway protein modification; [NiFe] hydrogenase maturation. Involved in the maturation of [NiFe] hydrogenases. Involved in the biosynthesis of the Fe(CN)(2)CO cofactor. The polypeptide is Hydrogenase maturation factor HypD2 (hypD2) (Bradyrhizobium diazoefficiens (strain JCM 10833 / BCRC 13528 / IAM 13628 / NBRC 14792 / USDA 110)).